An 858-amino-acid chain; its full sequence is MGRGIGSKRRVEDDDGENMPGRKKKEEEEEEEDDDGEEEYEVDVVRDRIGSSRGSRLALFGSDLRLGRFRPRRRRVAPVDGDDGIFQDFVIDPDNKWYRLWTRFILVWAVYSSFFTPLEFGFFRGLPRNLFFLDIAGQIAFLIDIVLRFFVAYRDPDTYRMVHNPTSIALRYCKSSFIFDLLGCFPWDAIYKACGSKEEVRYLLWIRLTRAMKVTEFFRSMEKDIRINYLFTRIVKLIVVELYCTHTAACIFYYLATTLPESMEGYTWIGSLQLGDYSYSHFREIDLTKRYMTSLYFAIVTMATVGYGDIHAVNVREMIFIMIYVSFDMILGAYLIGNMTALIVKGSRTERFRDKMKEVIRYMNRNKLGKDIREQIKGHLRLQYESSYTEASVLQDIPVSIRAKISQTLYKPYIESIPLFKGCSAEFIQQIVIRLQEEFFLPGEVILEQGSAVDQLYFVCHGALEGVGIGEDGQEETILMLEPESSFGEIAVLCNIPQPFTVRVCELCRLLRLDKQSFTNILEIFFVDGRRILSNLSESSEYGSRIKQLESDITFHIGKQEAELTLRVNNAAFYGDMHQLKSLIRAGADPKNTDYDGRSPLHLAACKGFEDVVQFLLHEGVDIDLSDKFGNTPLLEAVKQGHDRVATLLFSKGAKLSLENAGSHLCTAVARGDTDFVRRALAYGGDPNARDYDHRAPLHIAAAEGLYLMAKLLVDAGASVFATDRWGTTPLDEGRRCGSRTMVQLLEAAKSGELSRYPERGEEVRDKMHPRRCSVFPHHPWDGGERRREGVVVWIPHTIEGLVSSAQEKLGLAGSGEGLRLLGEDGARVLDVDMVHDGQKLYLVVGGGGDDGGTEARQ.

Residues 1 to 41 (MGRGIGSKRRVEDDDGENMPGRKKKEEEEEEEDDDGEEEYE) form a disordered region. The Cytoplasmic segment spans residues 1–102 (MGRGIGSKRR…PDNKWYRLWT (102 aa)). The segment covering 27-41 (EEEEEEDDDGEEEYE) has biased composition (acidic residues). Residues 103 to 123 (RFILVWAVYSSFFTPLEFGFF) traverse the membrane as a helical segment. At 124 to 130 (RGLPRNL) the chain is on the extracellular side. A helical membrane pass occupies residues 131–151 (FFLDIAGQIAFLIDIVLRFFV). The Cytoplasmic segment spans residues 152 to 174 (AYRDPDTYRMVHNPTSIALRYCK). Residues 175 to 195 (SSFIFDLLGCFPWDAIYKACG) traverse the membrane as a helical segment. Residues 196-201 (SKEEVR) lie on the Extracellular side of the membrane. The helical; Voltage-sensor transmembrane segment at 202–222 (YLLWIRLTRAMKVTEFFRSME) threads the bilayer. Residues 223 to 236 (KDIRINYLFTRIVK) are Cytoplasmic-facing. A helical membrane pass occupies residues 237–257 (LIVVELYCTHTAACIFYYLAT). At 258 to 292 (TLPESMEGYTWIGSLQLGDYSYSHFREIDLTKRYM) the chain is on the extracellular side. The pore-forming intramembrane region spans 293–312 (TSLYFAIVTMATVGYGDIHA). Over 313–316 (VNVR) the chain is Extracellular. Residues 317-337 (EMIFIMIYVSFDMILGAYLIG) form a helical membrane-spanning segment. The Cytoplasmic segment spans residues 338-858 (NMTALIVKGS…GDDGGTEARQ (521 aa)). 419 to 539 (LFKGCSAEFI…RRILSNLSES (121 aa)) contributes to the a nucleoside 3',5'-cyclic phosphate binding site. ANK repeat units lie at residues 559 to 592 (KQEAELTLRVNNAAFYGDMHQLKSLIRAGADPKN), 596 to 625 (DGRSPLHLAACKGFEDVVQFLLHEGVDIDL), 629 to 658 (FGNTPLLEAVKQGHDRVATLLFSKGAKLSL), 660 to 689 (NAGSHLCTAVARGDTDFVRRALAYGGDPNA), 693 to 722 (DHRAPLHIAAAEGLYLMAKLLVDAGASVFA), and 726 to 756 (WGTTPLDEGRRCGSRTMVQLLEAAKSGELSR). The region spanning 772–858 (RCSVFPHHPW…GDDGGTEARQ (87 aa)) is the KHA domain.

Belongs to the potassium channel family. Plant (TC 1.A.1.4) subfamily.

It is found in the membrane. Functionally, probable outward-rectifying potassium channel. The polypeptide is Potassium channel KOR1 (Oryza sativa subsp. japonica (Rice)).